We begin with the raw amino-acid sequence, 290 residues long: Acetyl-coenzyme A carboxylase carboxyl transferase subunit beta (290 aa).

A CoA carboxyltransferase N-terminal domain is found at 28-290 (IMTKCPKCKK…SRGGDEWHTN (263 aa)). Zn(2+) is bound by residues Cys32, Cys35, Cys51, and Cys54. The C4-type zinc-finger motif lies at 32–54 (CPKCKKIMYTKELVKNLRVCISC).

Belongs to the AccD/PCCB family. In terms of assembly, acetyl-CoA carboxylase is a heterohexamer composed of biotin carboxyl carrier protein (AccB), biotin carboxylase (AccC) and two subunits each of ACCase subunit alpha (AccA) and ACCase subunit beta (AccD). It depends on Zn(2+) as a cofactor.

The protein localises to the cytoplasm. It carries out the reaction N(6)-carboxybiotinyl-L-lysyl-[protein] + acetyl-CoA = N(6)-biotinyl-L-lysyl-[protein] + malonyl-CoA. The protein operates within lipid metabolism; malonyl-CoA biosynthesis; malonyl-CoA from acetyl-CoA: step 1/1. Component of the acetyl coenzyme A carboxylase (ACC) complex. Biotin carboxylase (BC) catalyzes the carboxylation of biotin on its carrier protein (BCCP) and then the CO(2) group is transferred by the transcarboxylase to acetyl-CoA to form malonyl-CoA. The chain is Acetyl-coenzyme A carboxylase carboxyl transferase subunit beta from Anoxybacillus flavithermus (strain DSM 21510 / WK1).